The following is a 481-amino-acid chain: MAVERKKWSENFSEWYNELIETAGIQDKRYPVKGMNVWLPYGLKIMRNIERFIHAEMERTGHDEVLFPALIPETEFQKEAEHIKGFEGEVYWVTHAGLEPLDVRLILRPTSETAMYSMFSLWIRSHADLPFKIYQIVNVYRYETKHTRPLIRVREISRFFEAHTAHDSYEDAERQIKEDLEIFDNLARFLALPYIISKRPEWDKFPGAYYSLGAEVMMPDGRTLQIGTMHNYRQNFAKAYNIQYETETGDHEYVHQTTFGMSERLLAAVIAIHGDDRGMVLPPTIAPIQVVIVPIPKKDSEADVFAYAREIAEELRTAGIRVHVDERDIRPGRKYYDWELKGVPLRIEVGPRDVEGKKAVLARRDTLEKITVERDNIVEEVRKTLDAIHENLYQRAKEFLESHIKRVDTIEEAKAVFEDRRGIVEIPWCGEEECGLRMEEELDAKMLGIPYPEEKAKAPEGKKCPVCGREAKFIARFARTY.

It belongs to the class-II aminoacyl-tRNA synthetase family. ProS type 3 subfamily. As to quaternary structure, homodimer.

Its subcellular location is the cytoplasm. The enzyme catalyses tRNA(Pro) + L-proline + ATP = L-prolyl-tRNA(Pro) + AMP + diphosphate. Catalyzes the attachment of proline to tRNA(Pro) in a two-step reaction: proline is first activated by ATP to form Pro-AMP and then transferred to the acceptor end of tRNA(Pro). This is Proline--tRNA ligase from Thermococcus kodakarensis (strain ATCC BAA-918 / JCM 12380 / KOD1) (Pyrococcus kodakaraensis (strain KOD1)).